The sequence spans 324 residues: DNA-directed RNA polymerase subunit alpha (324 aa).

Residues 1–228 (MIEFQKPTIR…EHFNLFTDLS (228 aa)) form an alpha N-terminal domain (alpha-NTD) region. The alpha C-terminal domain (alpha-CTD) stretch occupies residues 245 to 324 (RNKLLDMTIE…STPKEEEEEK (80 aa)).

This sequence belongs to the RNA polymerase alpha chain family. As to quaternary structure, homodimer. The RNAP catalytic core consists of 2 alpha, 1 beta, 1 beta' and 1 omega subunit. When a sigma factor is associated with the core the holoenzyme is formed, which can initiate transcription.

The catalysed reaction is RNA(n) + a ribonucleoside 5'-triphosphate = RNA(n+1) + diphosphate. Its function is as follows. DNA-dependent RNA polymerase catalyzes the transcription of DNA into RNA using the four ribonucleoside triphosphates as substrates. In Caldicellulosiruptor bescii (strain ATCC BAA-1888 / DSM 6725 / KCTC 15123 / Z-1320) (Anaerocellum thermophilum), this protein is DNA-directed RNA polymerase subunit alpha.